Here is a 283-residue protein sequence, read N- to C-terminus: MGKIIDGKKIASEIRNELKEEVKKFTEEGRPPGLSVVLVGDDPASRTYVRMKEKVAKEIGIYSKVDYLSRQTTQDELLDIVDKLNNDEKIDGILVQLPLPDHIDEKAVIEAISPFKDVDGFHPINTGKLFSGMTGQRFEACTPLGIIELLDREGIEIDGKKAVVVGRSNIVGKPVAHLLLERHATVTVCHSHTADLGIETRQADILVVAAGRPKLVKGEMVKEGAAVIDVGTNRVDGHLVGDVDFEAARQRAGYITPVPGGVGPMTIAMLMKNTVKARKYHGV.

Residues 166 to 168 (GRS), serine 191, and threonine 232 contribute to the NADP(+) site.

Belongs to the tetrahydrofolate dehydrogenase/cyclohydrolase family. In terms of assembly, homodimer.

It catalyses the reaction (6R)-5,10-methylene-5,6,7,8-tetrahydrofolate + NADP(+) = (6R)-5,10-methenyltetrahydrofolate + NADPH. The enzyme catalyses (6R)-5,10-methenyltetrahydrofolate + H2O = (6R)-10-formyltetrahydrofolate + H(+). The protein operates within one-carbon metabolism; tetrahydrofolate interconversion. Functionally, catalyzes the oxidation of 5,10-methylenetetrahydrofolate to 5,10-methenyltetrahydrofolate and then the hydrolysis of 5,10-methenyltetrahydrofolate to 10-formyltetrahydrofolate. The sequence is that of Bifunctional protein FolD from Halothermothrix orenii (strain H 168 / OCM 544 / DSM 9562).